The chain runs to 469 residues: UDP-N-acetylmuramate--L-alanine ligase (469 aa).

ATP is bound at residue 119–125; sequence GTHGKTT.

It belongs to the MurCDEF family.

The protein resides in the cytoplasm. The enzyme catalyses UDP-N-acetyl-alpha-D-muramate + L-alanine + ATP = UDP-N-acetyl-alpha-D-muramoyl-L-alanine + ADP + phosphate + H(+). It functions in the pathway cell wall biogenesis; peptidoglycan biosynthesis. Its function is as follows. Cell wall formation. The chain is UDP-N-acetylmuramate--L-alanine ligase from Vesicomyosocius okutanii subsp. Calyptogena okutanii (strain HA).